The following is a 775-amino-acid chain: Acylamino-acid-releasing enzyme 1 (775 aa).

Catalysis depends on charge relay system residues Ser-627, Asp-718, and His-750.

The protein belongs to the peptidase S9C family. As to quaternary structure, homotetramer.

The protein resides in the cytoplasm. It carries out the reaction Cleavage of an N-acetyl or N-formyl amino acid from the N-terminus of a polypeptide.. Its function is as follows. Catalyzes the hydrolysis of the N-terminal peptide bond of an N-acetylated peptide to generate an N-acetylated amino acid and a peptide with a free N-terminus. The protein is Acylamino-acid-releasing enzyme 1 of Oryza sativa subsp. japonica (Rice).